A 363-amino-acid chain; its full sequence is Probable matrix metalloproteinase 095L (363 aa).

A signal peptide spans 1–25 (MSVDSFTSRLAVVMTAVVLVWWAQA). A propeptide spans 26–126 (LPVPSPRRGE…PRCGVPDVSK (101 aa)) (activation peptide). The Cysteine switch signature appears at 117 to 124 (PRCGVPDV). Zn(2+)-binding residues include Cys-119 and His-275. Glu-276 is an active-site residue. Residues His-279 and His-285 each coordinate Zn(2+).

It belongs to the peptidase M10A family. Requires Zn(2+) as cofactor.

It is found in the secreted. Its function is as follows. Probable endopeptidase. In Aedes vexans (Inland floodwater mosquito), this protein is Probable matrix metalloproteinase 095L.